A 95-amino-acid polypeptide reads, in one-letter code: UPF0512 protein H (95 aa).

The protein belongs to the UPF0512 family.

The polypeptide is UPF0512 protein H (Dictyostelium discoideum (Social amoeba)).